A 1436-amino-acid polypeptide reads, in one-letter code: tRNA (guanosine(18)-2'-O)-methyltransferase (1436 aa).

Residues 1365 to 1367, Gly1389, and 1409 to 1418 contribute to the S-adenosyl-L-methionine site; these read LEQ and IQQFGVIRSM.

It belongs to the class IV-like SAM-binding methyltransferase superfamily. RNA methyltransferase TrmH family.

It is found in the cytoplasm. The catalysed reaction is guanosine(18) in tRNA + S-adenosyl-L-methionine = 2'-O-methylguanosine(18) in tRNA + S-adenosyl-L-homocysteine + H(+). S-adenosyl-L-methionine-dependent 2'-O-ribose methyltransferase that catalyzes the formation of 2'-O-methylguanosine at position 18 (Gm18) in various tRNAs. The sequence is that of tRNA (guanosine(18)-2'-O)-methyltransferase from Saccharomyces cerevisiae (strain ATCC 204508 / S288c) (Baker's yeast).